A 234-amino-acid chain; its full sequence is Uracil-DNA glycosylase (234 aa).

Aspartate 68 functions as the Proton acceptor in the catalytic mechanism.

Belongs to the uracil-DNA glycosylase (UDG) superfamily. UNG family.

Its subcellular location is the cytoplasm. The enzyme catalyses Hydrolyzes single-stranded DNA or mismatched double-stranded DNA and polynucleotides, releasing free uracil.. Its function is as follows. Excises uracil residues from the DNA which can arise as a result of misincorporation of dUMP residues by DNA polymerase or due to deamination of cytosine. In Ruegeria sp. (strain TM1040) (Silicibacter sp.), this protein is Uracil-DNA glycosylase.